A 42-amino-acid polypeptide reads, in one-letter code: Ostricacin-4 (42 aa).

Disulfide bonds link Cys-8/Cys-36, Cys-15/Cys-30, and Cys-20/Cys-37.

The protein localises to the secreted. Its function is as follows. Has antibacterial activity against the Gram-positive bacterium S.aureus 1056 MRSA (MIC=11.48 ug/ml) and the Gram-negative bacterium E.coli O157:H7 (MIC=12.03 ug/ml). Does not have antifungal activity against the yeast C.albicans 3153A. This is Ostricacin-4 from Struthio camelus (Common ostrich).